The following is a 56-amino-acid chain: Alpha-pompilidotoxin (56 aa).

The signal sequence occupies residues 1-22 (MFKQLILLALAAVFLLINISSA). A propeptide spanning residues 23–42 (EPAAEPNANAEPLAEASAEP) is cleaved from the precursor. Leu-55 is subject to Leucine amide.

Expressed by the venom gland.

The protein localises to the secreted. Functionally, inhibits sodium channels (Nav) inactivation. Shows two types of inhibitory activities on channels. Inhibition of hNav1.6/SCN8A shows a large increase in the steady-state current component without any increase in the slow component, whereas inhibition of hNav1.1/SCN1A, hNav1.2/SCN2A, hNav1.3/SCN3A and hNav1.7/SCN9A shows a large increase in the slow component with only a small steady-state component. Is 5-fold less potent than beta-PMTX for inducing repetitive action potentials in lobster neuromuscular junctions. The polypeptide is Alpha-pompilidotoxin (Anoplius samariensis (Solitary wasp)).